A 571-amino-acid chain; its full sequence is Hsp70-Hsp90 organizing protein 2 (571 aa).

TPR repeat units follow at residues 2–35 (ADEAKAKGNAAFSSGDFNSAVNHFTDAINLTPTN), 37–69 (VLFSNRSAAHASLNHYDEALSDAKKTVELKPDW), and 70–103 (GKGYSRLGAAHLGLNQFDEAVEAYSKGLEIDPSN). The disordered stretch occupies residues 117-137 (ASRSRASAPNPFGDAFQGPEM). Positions 134-173 (GPEMWSKLTADPSTRGLLKQPDFVNMMKEIQRNPSNLNLY) constitute an STI1 1 domain. S168 is subject to Phosphoserine. The segment covering 198–207 (DDMEIGEEEM) has biased composition (acidic residues). Residues 198–245 (DDMEIGEEEMAVPSRKEPEVEKKRKPEPEPEPEPEFGEEKQKKLKAQK) form a disordered region. Basic and acidic residues-rich tracts occupy residues 211–225 (SRKEPEVEKKRKPEP) and 234–245 (GEEKQKKLKAQK). Residues 240-257 (KLKAQKEKELGNAAYKKK) carry the Bipartite nuclear localization signal motif. 6 TPR repeats span residues 243–276 (AQKEKELGNAAYKKKDFETAIQHYSTAMEIDDED), 278–310 (SYITNRAAVHLEMGKYDECIKDCDKAVERGREL), 322–355 (TRKGTALGKMAKVSKDYEPVIQTYQKALTEHRNP), 382–415 (GDEEREKGNDFFKEQKYPDAVRHYTEAIKRNPKD), 417–449 (RAYSNRAACYTKLGAMPEGLKDAEKCIELDPTF), and 450–483 (LKGYSRKGAVQFFMKEYDNAMETYQKGLEHDPNN). Residues 520–559 (DPEIQNILTDPVMRQVLSDLQENPAAAQKHMQNPMIMNKI) form the STI1 2 domain.

In terms of assembly, co-chaperone that forms a complex with HSP70 and HSP90 and preproteins (e.g. chloroplast preproteins). Phosphorylated. Post-translationally, acetylated.

The protein localises to the cytoplasm. It localises to the nucleus. In terms of biological role, mediates the association of the molecular chaperones HSP70 and HSP90. Mediates nuclear encoded chloroplast preproteins binding to HSP90 prior to chloroplastic sorting. The sequence is that of Hsp70-Hsp90 organizing protein 2 (HOP2) from Arabidopsis thaliana (Mouse-ear cress).